We begin with the raw amino-acid sequence, 256 residues long: Ribosomal RNA large subunit methyltransferase E (256 aa).

5 residues coordinate S-adenosyl-L-methionine: Gly-48, Trp-50, Asp-68, Asp-86, and Asp-111. The Proton acceptor role is filled by Lys-151. The TRAM domain occupies 198–256 (PVSPGDELDATVVDIGSEGDGIIKIDGYTLFVPGVENGDSVRVRVTDLKSNVGFAEVIE).

The protein belongs to the class I-like SAM-binding methyltransferase superfamily. RNA methyltransferase RlmE family.

Its subcellular location is the cytoplasm. It carries out the reaction uridine(2552) in 23S rRNA + S-adenosyl-L-methionine = 2'-O-methyluridine(2552) in 23S rRNA + S-adenosyl-L-homocysteine + H(+). Its function is as follows. Specifically methylates the uridine in position 2552 of 23S rRNA at the 2'-O position of the ribose in the fully assembled 50S ribosomal subunit. The polypeptide is Ribosomal RNA large subunit methyltransferase E (Haloquadratum walsbyi (strain DSM 16790 / HBSQ001)).